Reading from the N-terminus, the 199-residue chain is Prolactin-2 (199 aa).

Intrachain disulfides connect Cys4–Cys11, Cys58–Cys174, and Cys191–Cys199.

Belongs to the somatotropin/prolactin family.

The protein localises to the secreted. This Crocodylus novaeguineae (Crocodile) protein is Prolactin-2.